A 312-amino-acid chain; its full sequence is Nucleosome assembly protein 1-like 4 (312 aa).

Residues 24–78 (VETLKNKLQALAEQHVDVLESLAPSVRKRVDVLMEIQSQHDELEVKFFEEKAALE) adopt a coiled-coil conformation. The Nuclear export signal motif lies at 45–60 (LAPSVRKRVDVLMEIQ). The disordered stretch occupies residues 289–312 (DYGASWVDDEEEDDNNDEYSDEEA).

Belongs to the nucleosome assembly protein (NAP) family.

It is found in the nucleus. The protein localises to the cytoplasm. In terms of biological role, may modulate chromatin structure by regulation of nucleosome assembly/disassembly. The protein is Nucleosome assembly protein 1-like 4 of Oryza sativa subsp. japonica (Rice).